A 219-amino-acid polypeptide reads, in one-letter code: 2-hydroxy-3-keto-5-methylthiopentenyl-1-phosphate phosphatase (219 aa).

It belongs to the HAD-like hydrolase superfamily. MtnX family.

The catalysed reaction is 2-hydroxy-5-methylsulfanyl-3-oxopent-1-enyl phosphate + H2O = 1,2-dihydroxy-5-(methylsulfanyl)pent-1-en-3-one + phosphate. Its pathway is amino-acid biosynthesis; L-methionine biosynthesis via salvage pathway; L-methionine from S-methyl-5-thio-alpha-D-ribose 1-phosphate: step 4/6. Functionally, dephosphorylates 2-hydroxy-3-keto-5-methylthiopentenyl-1-phosphate (HK-MTPenyl-1-P) yielding 1,2-dihydroxy-3-keto-5-methylthiopentene (DHK-MTPene). This is 2-hydroxy-3-keto-5-methylthiopentenyl-1-phosphate phosphatase from Bacillus cereus (strain G9842).